A 2150-amino-acid chain; its full sequence is Genome polyprotein (2150 aa).

Gly2 carries N-myristoyl glycine; by host lipidation. Topologically, residues 2–1463 are cytoplasmic; sequence GAQVSRQNVG…ELNLANTIIT (1462 aa). The segment at 565-581 is amphipathic alpha-helix; sequence IAQNPVENYIDEVLNEV. The interval 592–611 is disordered; the sequence is PTTSNSAPALDAAETGHTSS. Active-site for protease 2A activity residues include His868 and Asp885. Zn(2+) contacts are provided by Cys902 and Cys904. Cys956 functions as the For protease 2A activity in the catalytic mechanism. Positions 962 and 964 each coordinate Zn(2+). The segment at 1088 to 1157 is membrane-binding; sequence SDSWLKKFTE…SLRVADMKTQ (70 aa). The segment at 1088–1221 is oligomerization; sequence SDSWLKKFTE…PPGAGKSITT (134 aa). The RNA-binding stretch occupies residues 1109-1113; the sequence is GNKIS. The SF3 helicase domain maps to 1181 to 1343; the sequence is EAKRIKTLYI…FKDPQGKLNV (163 aa). Zn(2+)-binding residues include Cys1350, Cys1361, and Cys1366. A C4-type; degenerate zinc finger spans residues 1350–1366; that stretch reads CDVDNRIGNARCCPFVC. The RNA-binding stretch occupies residues 1393–1400; the sequence is EDRRRRQV. The tract at residues 1404 to 1409 is oligomerization; that stretch reads MTAIFQ. An intramembrane segment occupies 1464-1479; that stretch reads IIANVIGMARIIYVIY. Residues 1480–2150 lie on the Cytoplasmic side of the membrane; sequence KLFCTLQGPY…LLLHEWYEKF (671 aa). Position 1489 is an O-(5'-phospho-RNA)-tyrosine (Tyr1489). The region spanning 1508-1686 is the Peptidase C3 domain; the sequence is GPEEEFGMSL…FSAMLLRSYF (179 aa). Active-site for protease 3C activity residues include His1547, Glu1578, and Cys1654. In terms of domain architecture, RdRp catalytic spans 1918-2031; the sequence is KCIMAFDYTN…SYIHELDMEA (114 aa). Asp1924 and Asp2017 together coordinate Mg(2+).

This sequence belongs to the picornaviruses polyprotein family. Interacts with capsid protein VP1 and capsid protein VP3 to form heterotrimeric protomers. As to quaternary structure, interacts with capsid protein VP0, and capsid protein VP3 to form heterotrimeric protomers. Five protomers subsequently associate to form pentamers which serve as building blocks for the capsid. Interacts with capsid protein VP2, capsid protein VP3 and capsid protein VP4 following cleavage of capsid protein VP0. In terms of assembly, interacts with capsid protein VP1 and capsid protein VP3 in the mature capsid. Interacts with capsid protein VP0 and capsid protein VP1 to form heterotrimeric protomers. Five protomers subsequently associate to form pentamers which serve as building blocks for the capsid. Interacts with capsid protein VP4 in the mature capsid. Interacts with protein 2C; this interaction may be important for virion morphogenesis. As to quaternary structure, interacts with capsid protein VP1 and capsid protein VP3. In terms of assembly, homodimer. Homohexamer; forms a hexameric ring structure with 6-fold symmetry characteristic of AAA+ ATPases. Interacts (via N-terminus) with host RTN3 (via reticulon domain); this interaction is important for viral replication. Interacts with capsid protein VP3; this interaction may be important for virion morphogenesis. As to quaternary structure, interacts with protein 3CD. In terms of assembly, homodimer. Interacts with host GBF1. Interacts (via GOLD domain) with host ACBD3 (via GOLD domain); this interaction allows the formation of a viral protein 3A/ACBD3 heterotetramer with a 2:2 stoichiometry, which will stimulate the recruitment of host PI4KB in order to synthesize PI4P at the viral RNA replication sites. Interacts with RNA-directed RNA polymerase. As to quaternary structure, interacts with protein 3AB and with RNA-directed RNA polymerase. In terms of assembly, interacts with Viral protein genome-linked and with protein 3CD. Requires Mg(2+) as cofactor. Specific enzymatic cleavages in vivo by the viral proteases yield processing intermediates and the mature proteins. In terms of processing, myristoylation is required for the formation of pentamers during virus assembly. Further assembly of 12 pentamers and a molecule of genomic RNA generates the provirion. Post-translationally, during virion maturation, immature virions are rendered infectious following cleavage of VP0 into VP4 and VP2. This maturation seems to be an autocatalytic event triggered by the presence of RNA in the capsid and it is followed by a conformational change infectious virion. Myristoylation is required during RNA encapsidation and formation of the mature virus particle. In terms of processing, VPg is uridylylated by the polymerase into VPg-pUpU. This acts as a nucleotide-peptide primer for the genomic RNA replication.

The protein resides in the virion. It localises to the host cytoplasm. The protein localises to the host cytoplasmic vesicle membrane. It is found in the host nucleus. It catalyses the reaction a ribonucleoside 5'-triphosphate + H2O = a ribonucleoside 5'-diphosphate + phosphate + H(+). It carries out the reaction Selective cleavage of Tyr-|-Gly bond in the picornavirus polyprotein.. The catalysed reaction is RNA(n) + a ribonucleoside 5'-triphosphate = RNA(n+1) + diphosphate. The enzyme catalyses Selective cleavage of Gln-|-Gly bond in the poliovirus polyprotein. In other picornavirus reactions Glu may be substituted for Gln, and Ser or Thr for Gly.. With respect to regulation, replication or transcription is subject to high level of random mutations by the nucleotide analog ribavirin. In terms of biological role, forms an icosahedral capsid of pseudo T=3 symmetry with capsid proteins VP2 and VP3. The capsid is 300 Angstroms in diameter, composed of 60 copies of each capsid protein and enclosing the viral positive strand RNA genome. Capsid protein VP1 mainly forms the vertices of the capsid. Capsid protein VP1 interacts with host cell receptor to provide virion attachment to target host cells. This attachment induces virion internalization. Tyrosine kinases are probably involved in the entry process. After binding to its receptor, the capsid undergoes conformational changes. Capsid protein VP1 N-terminus (that contains an amphipathic alpha-helix) and capsid protein VP4 are externalized. Together, they shape a pore in the host membrane through which viral genome is translocated to host cell cytoplasm. Its function is as follows. Forms an icosahedral capsid of pseudo T=3 symmetry with capsid proteins VP2 and VP3. The capsid is 300 Angstroms in diameter, composed of 60 copies of each capsid protein and enclosing the viral positive strand RNA genome. Lies on the inner surface of the capsid shell. After binding to the host receptor, the capsid undergoes conformational changes. Capsid protein VP4 is released, Capsid protein VP1 N-terminus is externalized, and together, they shape a pore in the host membrane through which the viral genome is translocated into the host cell cytoplasm. Functionally, component of immature procapsids, which is cleaved into capsid proteins VP4 and VP2 after maturation. Allows the capsid to remain inactive before the maturation step. In terms of biological role, cysteine protease that cleaves viral polyprotein and specific host proteins. It is responsible for the autocatalytic cleavage between the P1 and P2 regions, which is the first cleavage occurring in the polyprotein. Also cleaves the host translation initiation factor EIF4G1, in order to shut down the capped cellular mRNA translation. Inhibits the host nucleus-cytoplasm protein and RNA trafficking by cleaving host members of the nuclear pores. Counteracts stress granule formation probably by antagonizing its assembly or promoting its dissassembly. Its function is as follows. Plays an essential role in the virus replication cycle by acting as a viroporin. Creates a pore in the host endoplasmic reticulum and as a consequence releases Ca2+ in the cytoplasm of infected cell. In turn, high levels of cytoplasmic calcium may trigger membrane trafficking and transport of viral ER-associated proteins to viroplasms, sites of viral genome replication. Induces and associates with structural rearrangements of intracellular membranes. Displays RNA-binding, nucleotide binding and NTPase activities. May play a role in virion morphogenesis and viral RNA encapsidation by interacting with the capsid protein VP3. Functionally, localizes the viral replication complex to the surface of membranous vesicles. Together with protein 3CD binds the Cis-Active RNA Element (CRE) which is involved in RNA synthesis initiation. Acts as a cofactor to stimulate the activity of 3D polymerase, maybe through a nucleid acid chaperone activity. In terms of biological role, localizes the viral replication complex to the surface of membranous vesicles. It inhibits host cell endoplasmic reticulum-to-Golgi apparatus transport and causes the disassembly of the Golgi complex, possibly through GBF1 interaction. This would result in depletion of MHC, trail receptors and IFN receptors at the host cell surface. Plays an essential role in viral RNA replication by recruiting ACBD3 and PI4KB at the viral replication sites, thereby allowing the formation of the rearranged membranous structures where viral replication takes place. Its function is as follows. Acts as a primer for viral RNA replication and remains covalently bound to viral genomic RNA. VPg is uridylylated prior to priming replication into VPg-pUpU. The oriI viral genomic sequence may act as a template for this. The VPg-pUpU is then used as primer on the genomic RNA poly(A) by the RNA-dependent RNA polymerase to replicate the viral genome. During genome replication, the VPg-RNA linkage is removed by the host TDP2, thereby accelerating replication. During the late stage of the replication cycle, host TDP2 is excluded from sites of viral RNA synthesis and encapsidation, allowing for the generation of progeny virions. Involved in the viral replication complex and viral polypeptide maturation. It exhibits protease activity with a specificity and catalytic efficiency that is different from protease 3C. Protein 3CD lacks polymerase activity. Protein 3CD binds to the 5'UTR of the viral genome. Functionally, replicates the viral genomic RNA on the surface of intracellular membranes. May form linear arrays of subunits that propagate along a strong head-to-tail interaction called interface-I. Covalently attaches UMP to a tyrosine of VPg, which is used to prime RNA synthesis. The positive stranded RNA genome is first replicated at virus induced membranous vesicles, creating a dsRNA genomic replication form. This dsRNA is then used as template to synthesize positive stranded RNA genomes. ss(+)RNA genomes are either translated, replicated or encapsidated. In terms of biological role, major viral protease that mediates proteolytic processing of the polyprotein. Cleaves host EIF5B, contributing to host translation shutoff. Also cleaves host PABPC1, contributing to host translation shutoff. Cleaves host NLRP1, triggers host N-glycine-mediated degradation of the autoinhibitory NLRP1 N-terminal fragment. The sequence is that of Genome polyprotein from Homo sapiens (Human).